The chain runs to 86 residues: Conotoxin S6.10 (86 aa).

The first 22 residues, 1 to 22, serve as a signal peptide directing secretion; sequence MKLTCVLIIAVLFLTACQLATA. The propeptide occupies 23-45; that stretch reads KTYSKGRQKHRALRSTDKNIKLT. 3 cysteine pairs are disulfide-bonded: cysteine 48–cysteine 62, cysteine 55–cysteine 66, and cysteine 61–cysteine 73.

Belongs to the conotoxin O1 superfamily. As to expression, expressed by the venom duct.

Its subcellular location is the secreted. The polypeptide is Conotoxin S6.10 (Conus striatus (Striated cone)).